Here is a 382-residue protein sequence, read N- to C-terminus: S-adenosylmethionine synthase (382 aa).

Histidine 16 provides a ligand contact to ATP. Aspartate 18 contacts Mg(2+). Residue glutamate 44 participates in K(+) binding. Positions 57 and 100 each coordinate L-methionine. The tract at residues 100 to 110 (QSADIAIGVDE) is flexible loop. ATP is bound by residues 165–167 (DAK), aspartate 240, 246–247 (RK), alanine 263, and lysine 267. Aspartate 240 contributes to the L-methionine binding site. An L-methionine-binding site is contributed by lysine 271.

Belongs to the AdoMet synthase family. In terms of assembly, homotetramer; dimer of dimers. Mg(2+) serves as cofactor. Requires K(+) as cofactor.

It is found in the cytoplasm. The catalysed reaction is L-methionine + ATP + H2O = S-adenosyl-L-methionine + phosphate + diphosphate. It participates in amino-acid biosynthesis; S-adenosyl-L-methionine biosynthesis; S-adenosyl-L-methionine from L-methionine: step 1/1. Functionally, catalyzes the formation of S-adenosylmethionine (AdoMet) from methionine and ATP. The overall synthetic reaction is composed of two sequential steps, AdoMet formation and the subsequent tripolyphosphate hydrolysis which occurs prior to release of AdoMet from the enzyme. This is S-adenosylmethionine synthase from Alcanivorax borkumensis (strain ATCC 700651 / DSM 11573 / NCIMB 13689 / SK2).